The chain runs to 86 residues: Small ribosomal subunit protein bS20 (86 aa).

Residues 1–22 (MANIKSAKKRAVQSEKRRKHNA) are compositionally biased toward basic residues. The interval 1–28 (MANIKSAKKRAVQSEKRRKHNASGRSMM) is disordered.

Belongs to the bacterial ribosomal protein bS20 family.

In terms of biological role, binds directly to 16S ribosomal RNA. This Serratia proteamaculans (strain 568) protein is Small ribosomal subunit protein bS20.